Here is a 190-residue protein sequence, read N- to C-terminus: dCTP deaminase (190 aa).

113–118 (KSTYAR) lines the dCTP pocket. The active-site Proton donor/acceptor is Glu139. 4 residues coordinate dCTP: Gln158, Tyr172, Lys181, and Gln182.

This sequence belongs to the dCTP deaminase family. In terms of assembly, homotrimer.

The enzyme catalyses dCTP + H2O + H(+) = dUTP + NH4(+). Its pathway is pyrimidine metabolism; dUMP biosynthesis; dUMP from dCTP (dUTP route): step 1/2. Catalyzes the deamination of dCTP to dUTP. This is dCTP deaminase from Chlamydia felis (strain Fe/C-56) (Chlamydophila felis).